A 430-amino-acid polypeptide reads, in one-letter code: Enolase (430 aa).

Glutamine 164 provides a ligand contact to (2R)-2-phosphoglycerate. Glutamate 208 functions as the Proton donor in the catalytic mechanism. Mg(2+) contacts are provided by aspartate 245, glutamate 288, and aspartate 315. Lysine 340, arginine 369, serine 370, and lysine 391 together coordinate (2R)-2-phosphoglycerate. The Proton acceptor role is filled by lysine 340.

This sequence belongs to the enolase family. It depends on Mg(2+) as a cofactor.

The protein resides in the cytoplasm. Its subcellular location is the secreted. The protein localises to the cell surface. The enzyme catalyses (2R)-2-phosphoglycerate = phosphoenolpyruvate + H2O. It functions in the pathway carbohydrate degradation; glycolysis; pyruvate from D-glyceraldehyde 3-phosphate: step 4/5. Functionally, catalyzes the reversible conversion of 2-phosphoglycerate (2-PG) into phosphoenolpyruvate (PEP). It is essential for the degradation of carbohydrates via glycolysis. In Thermococcus onnurineus (strain NA1), this protein is Enolase.